The chain runs to 222 residues: Protein-L-isoaspartate O-methyltransferase (222 aa).

Residue S70 is part of the active site.

The protein belongs to the methyltransferase superfamily. L-isoaspartyl/D-aspartyl protein methyltransferase family.

The protein localises to the cytoplasm. It catalyses the reaction [protein]-L-isoaspartate + S-adenosyl-L-methionine = [protein]-L-isoaspartate alpha-methyl ester + S-adenosyl-L-homocysteine. Functionally, catalyzes the methyl esterification of L-isoaspartyl residues in peptides and proteins that result from spontaneous decomposition of normal L-aspartyl and L-asparaginyl residues. It plays a role in the repair and/or degradation of damaged proteins. The sequence is that of Protein-L-isoaspartate O-methyltransferase from Jannaschia sp. (strain CCS1).